The sequence spans 301 residues: Acetylglutamate kinase (301 aa).

Substrate is bound by residues 71–72 (GG), Arg93, and Asn198.

The protein belongs to the acetylglutamate kinase family. ArgB subfamily.

The protein resides in the cytoplasm. It carries out the reaction N-acetyl-L-glutamate + ATP = N-acetyl-L-glutamyl 5-phosphate + ADP. It participates in amino-acid biosynthesis; L-arginine biosynthesis; N(2)-acetyl-L-ornithine from L-glutamate: step 2/4. Functionally, catalyzes the ATP-dependent phosphorylation of N-acetyl-L-glutamate. The sequence is that of Acetylglutamate kinase from Rhizorhabdus wittichii (strain DSM 6014 / CCUG 31198 / JCM 15750 / NBRC 105917 / EY 4224 / RW1) (Sphingomonas wittichii).